The following is a 181-amino-acid chain: Probable pyruvoyl-dependent arginine decarboxylase (181 aa).

A Pyruvic acid (Ser) modification is found at Ser-43.

This sequence belongs to the PdaD family. Pyruvate serves as cofactor.

The enzyme catalyses L-arginine + H(+) = agmatine + CO2. This Chlorobium phaeovibrioides (strain DSM 265 / 1930) (Prosthecochloris vibrioformis (strain DSM 265)) protein is Probable pyruvoyl-dependent arginine decarboxylase.